We begin with the raw amino-acid sequence, 258 residues long: Snake venom serine proteinase 8 (258 aa).

Positions 1–18 are cleaved as a signal peptide; sequence MVLIRVLANLLILQLSYA. Positions 19-24 are excised as a propeptide; the sequence is QKSSEL. The Peptidase S1 domain occupies 25–249; the sequence is VIGGDECNIN…YNDWIQSIIA (225 aa). 6 disulfides stabilise this stretch: Cys31-Cys163, Cys50-Cys66, Cys98-Cys256, Cys142-Cys210, Cys174-Cys189, and Cys200-Cys225. N-linked (GlcNAc...) asparagine glycosylation is present at Asn44. Active-site charge relay system residues include His65 and Asp110. Ser204 acts as the Charge relay system in catalysis.

It belongs to the peptidase S1 family. Snake venom subfamily. In terms of assembly, monomer. In terms of tissue distribution, expressed by the venom gland.

It localises to the secreted. In terms of biological role, snake venom serine protease that may act in the hemostasis system of the prey. This Crotalus adamanteus (Eastern diamondback rattlesnake) protein is Snake venom serine proteinase 8.